Consider the following 379-residue polypeptide: Homoserine O-succinyltransferase (379 aa).

The region spanning N51 to L360 is the AB hydrolase-1 domain. S157 (nucleophile) is an active-site residue. R227 is a binding site for substrate. Residues D323 and H356 contribute to the active site. Residue D357 coordinates substrate.

Belongs to the AB hydrolase superfamily. MetX family. As to quaternary structure, homodimer.

It localises to the cytoplasm. It carries out the reaction L-homoserine + succinyl-CoA = O-succinyl-L-homoserine + CoA. Its pathway is amino-acid biosynthesis; L-methionine biosynthesis via de novo pathway; O-succinyl-L-homoserine from L-homoserine: step 1/1. Functionally, transfers a succinyl group from succinyl-CoA to L-homoserine, forming succinyl-L-homoserine. In Pseudomonas fluorescens (strain ATCC BAA-477 / NRRL B-23932 / Pf-5), this protein is Homoserine O-succinyltransferase.